The sequence spans 1132 residues: Phosphatidylinositide phosphatase SAC2 (1132 aa).

Residues 167–518 enclose the SAC domain; sequence LKMFMDSESF…GDSISRQYAG (352 aa). Residues 593–760 form the hSac2 domain; sequence RSHQELISQL…KSSKPHEDII (168 aa). Residues Ser827 and Ser830 each carry the phosphoserine modification. Residues 846–875 are disordered; the sequence is ESDGDMSSDNDSYHSDEFLTNSKSDEDRQL. The segment covering 856-874 has biased composition (basic and acidic residues); that stretch reads DSYHSDEFLTNSKSDEDRQ. Phosphoserine is present on residues Ser878, Ser881, Ser907, and Ser910. 2 disordered regions span residues 923–942 and 974–1017; these read VAHGSGLGKGQESPLKKSPS and LSET…LDVS. Ser1103 is subject to Phosphoserine.

Homodimer. Interacts with OCRL and RAB5A. Interacts with INPP5B and INPP4A. Interacts with STAT3; the interaction is independent of STAT3 'Tyr-705' phosphorylation status. Ubiquitous. Highly expressed in brain.

The protein localises to the membrane. Its subcellular location is the clathrin-coated pit. It localises to the early endosome. The protein resides in the recycling endosome. The catalysed reaction is a myo-inositol phosphate + H2O = myo-inositol + phosphate. In terms of biological role, inositol 4-phosphatase which mainly acts on phosphatidylinositol 4-phosphate. May be functionally linked to OCRL, which converts phosphatidylinositol 4,5-bisphosphate to phosphatidylinositol, for a sequential dephosphorylation of phosphatidylinositol 4,5-bisphosphate at the 5 and 4 position of inositol, thus playing an important role in the endocytic recycling. Regulator of TF:TFRC and integrins recycling pathway, is also involved in cell migration mechanisms. Modulates AKT/GSK3B pathway by decreasing AKT and GSK3B phosphorylation. Negatively regulates STAT3 signaling pathway through inhibition of STAT3 phosphorylation and translocation to the nucleus. Functionally important modulator of cardiac myocyte size and of the cardiac response to stress. May play a role as negative regulator of axon regeneration after central nervous system injuries. This chain is Phosphatidylinositide phosphatase SAC2, found in Homo sapiens (Human).